Here is a 366-residue protein sequence, read N- to C-terminus: Methyltransferase calH (366 aa).

S-adenosyl-L-methionine is bound by residues T189, D216, and 245-246 (NA).

It belongs to the class I-like SAM-binding methyltransferase superfamily.

Its pathway is secondary metabolite biosynthesis. Functionally, methyltransferase; part of the gene cluster that mediates the biosynthesis of calbistrin A and related compounds. Calbistrin A is a secondary metabolite with an interesting structure that was recently found to have bioactivity against leukemia cells. It consists of two polyketides linked by an ester bond: a bicyclic decalin containing polyketide and a linear 12 carbon dioic acid structure. The polyketide synthase calA is probably responsible for forming the decalin moiety. Because calA lacks a designated enoylreductase (ER) domain, the required activity is provided by the trans-enoyl reductase calK. Following release from the PKS, calF then probably catalyzes the oxidation and the subsequent Diels Alder cycloisomerization that lead to the formation of the decalin moiety. The decalin polyketide backbone includes two C-methyl groups, at C7 and C11 in backbone, of which the C7 position is probably methylated by the methyltransferase domain of calA. A candidate for adding the methyl group at C11, if not done by CalA, is the cluster methyltransferase calH. Several additional tailoring enzymes within the cluster could be involved in the modification of the decalin polyketide product. Those include the 3 cytochrome P450 monooxygenases CalE, CalG and CalL, of which one might be responsible for the introduction of the extra hydroxyl group attached to the backbone of the decalin moiety, at position C9 in the backbone, that allows for attachment of the linear moiety. One tailoring enzyme activity that is expected to be involved in biosynthesis of calbistrin is an acyltransferase for connecting the two polyketide synthase products, and which could be performed by the cluster acyltransferase calJ. The enzyme responsible for the biosynthesis of the linear moiety, probably a second PKS, has not been identified yet. The sequence is that of Methyltransferase calH from Penicillium decumbens.